The primary structure comprises 513 residues: 2-isopropylmalate synthase (513 aa).

The Pyruvate carboxyltransferase domain occupies 5–268; sequence LIIFDTTLRD…DVGIDTTQIV (264 aa). Positions 14, 202, 204, and 239 each coordinate Mn(2+). Positions 394 to 513 are regulatory domain; the sequence is RFISLSQRSE…KAVQKINPQI (120 aa).

Belongs to the alpha-IPM synthase/homocitrate synthase family. LeuA type 1 subfamily. In terms of assembly, homodimer. Mn(2+) serves as cofactor.

Its subcellular location is the cytoplasm. It catalyses the reaction 3-methyl-2-oxobutanoate + acetyl-CoA + H2O = (2S)-2-isopropylmalate + CoA + H(+). Its pathway is amino-acid biosynthesis; L-leucine biosynthesis; L-leucine from 3-methyl-2-oxobutanoate: step 1/4. In terms of biological role, catalyzes the condensation of the acetyl group of acetyl-CoA with 3-methyl-2-oxobutanoate (2-ketoisovalerate) to form 3-carboxy-3-hydroxy-4-methylpentanoate (2-isopropylmalate). This chain is 2-isopropylmalate synthase, found in Cupriavidus metallidurans (strain ATCC 43123 / DSM 2839 / NBRC 102507 / CH34) (Ralstonia metallidurans).